The primary structure comprises 315 residues: Olfactory receptor 3A10 (315 aa).

Residues 1 to 28 lie on the Extracellular side of the membrane; sequence MEPGAWGNRTAVTDFILLGLTGNVRLQP. N8 carries N-linked (GlcNAc...) asparagine glycosylation. The helical transmembrane segment at 29–49 threads the bilayer; it reads ILFVVFFFAYIVTVGGNLSIL. Topologically, residues 50-68 are cytoplasmic; the sequence is AAIFVEPKLHTPMYYFLGN. The helical transmembrane segment at 69-89 threads the bilayer; it reads LSLLDIGCISVTVPPMLVCLL. At 90-97 the chain is on the extracellular side; that stretch reads AHECRVPY. The helical transmembrane segment at 98-118 threads the bilayer; it reads AACISQLFFFHLLAGVDCHLL. Cysteines 100 and 192 form a disulfide. Topologically, residues 119-145 are cytoplasmic; sequence TAMAYDRYLAICQPLTYSTRMSREVQG. Residues 146 to 166 traverse the membrane as a helical segment; it reads TLVGICCTVSFINALTHTVAV. Residues 167–200 are Extracellular-facing; sequence SVLDFCGPNVVNHFYCDLPPLFQLSCSSIYLNGQ. Residues 201-221 traverse the membrane as a helical segment; it reads LLFVGATFMGVVPMILISVSY. Topologically, residues 222–239 are cytoplasmic; the sequence is AHVAAAVLRIRSTEGRKK. Residues 240–260 traverse the membrane as a helical segment; that stretch reads AFSTCGSHLTVVCIFYGTGFF. Over 261-274 the chain is Extracellular; it reads SYMRLGSVSASDKD. Residues 275–295 traverse the membrane as a helical segment; it reads KGIGILNTILSPMLNPLIYSL. Topologically, residues 296–315 are cytoplasmic; it reads RNPDVQGALKRVLTGKRYPV.

The protein belongs to the G-protein coupled receptor 1 family.

Its subcellular location is the cell membrane. In terms of biological role, odorant receptor. The protein is Olfactory receptor 3A10 of Mus musculus (Mouse).